A 217-amino-acid polypeptide reads, in one-letter code: uncharacterized protein (217 aa).

The 215-residue stretch at 2 to 216 (LCVKNVSLRL…AQWSENYNKL (215 aa)) folds into the ABC transporter domain. 34-41 (GPSGCGKS) is an ATP binding site.

The protein belongs to the ABC transporter superfamily.

Its function is as follows. Probably part of a binding-protein-dependent transport system YnjCD. Probably responsible for energy coupling to the transport system. This is an uncharacterized protein from Escherichia coli (strain K12).